The primary structure comprises 574 residues: Enolase 4 (574 aa).

The span at 165–175 shows a compositional bias: basic and acidic residues; the sequence is EKERRQMEREA. The disordered stretch occupies residues 165 to 221; that stretch reads EKERRQMEREASPMPLQPEPSPVTSPAPGKKKGSGKGKKAAVVEKPIPPEETPEAVV. Pro residues predominate over residues 179–189; it reads PLQPEPSPVTS. Over residues 193–203 the composition is skewed to basic residues; it reads GKKKGSGKGKK. Glutamate 287 contributes to the substrate binding site. Catalysis depends on lysine 467, which acts as the Proton acceptor. Lysine 518 contributes to the substrate binding site.

It belongs to the enolase family.

It catalyses the reaction (2R)-2-phosphoglycerate = phosphoenolpyruvate + H2O. It participates in carbohydrate degradation; glycolysis; pyruvate from D-glyceraldehyde 3-phosphate: step 4/5. This is Enolase 4 (eno4) from Xenopus tropicalis (Western clawed frog).